Reading from the N-terminus, the 851-residue chain is DNA mismatch repair protein MutS (851 aa).

602–609 (GPNMSGKS) is an ATP binding site.

The protein belongs to the DNA mismatch repair MutS family.

Its function is as follows. This protein is involved in the repair of mismatches in DNA. It is possible that it carries out the mismatch recognition step. This protein has a weak ATPase activity. This Streptococcus pyogenes serotype M3 (strain SSI-1) protein is DNA mismatch repair protein MutS.